The sequence spans 377 residues: MAKRDYYEVLGVAKNASDEDLKKAYRKLAMKYHPDRNPDSKEAEEKFKEAKEAYEVLGDEQKRAAYDRYGHAGVDPNAAGMGGGMGGGMGGGFADAFGDIFGEIFGAGRRGGGGPQVYRGADLKYALEITLEQAASGFDTEIRVPSWENCDTCHGSGAKAGTSPKTCRTCGGSGAVRMQQGFFSVQQTCPTCHGTGKEITDPCPSCDGVGRTRRNKTLQVKIPAGIDDGMRIRSSGNGEPGINGGPPGDLYVEIHIKQHKIFQRDGDDLHCELTIPFTTAALGGELQVPTLGGKAEISIPEGTQSGKTFRLRAKGIRGVRGSYPGDLYCHVVVETPVRLSDEQKAILRQFEASLNDGGDRHSPQSKSWTDRVKEFFS.

Residues 5-70 (DYYEVLGVAK…QKRAAYDRYG (66 aa)) form the J domain. The CR-type zinc-finger motif lies at 137–215 (GFDTEIRVPS…CDGVGRTRRN (79 aa)). The Zn(2+) site is built by Cys150, Cys153, Cys167, Cys170, Cys189, Cys192, Cys203, and Cys206. CXXCXGXG motif repeat units follow at residues 150 to 157 (CDTCHGSG), 167 to 174 (CRTCGGSG), 189 to 196 (CPTCHGTG), and 203 to 210 (CPSCDGVG).

This sequence belongs to the DnaJ family. In terms of assembly, homodimer. Zn(2+) serves as cofactor.

Its subcellular location is the cytoplasm. Functionally, participates actively in the response to hyperosmotic and heat shock by preventing the aggregation of stress-denatured proteins and by disaggregating proteins, also in an autonomous, DnaK-independent fashion. Unfolded proteins bind initially to DnaJ; upon interaction with the DnaJ-bound protein, DnaK hydrolyzes its bound ATP, resulting in the formation of a stable complex. GrpE releases ADP from DnaK; ATP binding to DnaK triggers the release of the substrate protein, thus completing the reaction cycle. Several rounds of ATP-dependent interactions between DnaJ, DnaK and GrpE are required for fully efficient folding. Also involved, together with DnaK and GrpE, in the DNA replication of plasmids through activation of initiation proteins. The protein is Chaperone protein DnaJ of Bordetella parapertussis (strain 12822 / ATCC BAA-587 / NCTC 13253).